Reading from the N-terminus, the 560-residue chain is Phenylalanine--tRNA ligase beta subunit (560 aa).

One can recognise a B5 domain in the interval 279 to 354 (LTPKEFEVDL…IAYGYNNIEP (76 aa)). Residues Asp-332, Asp-338, Glu-341, and Asp-342 each contribute to the Mg(2+) site.

This sequence belongs to the phenylalanyl-tRNA synthetase beta subunit family. Type 2 subfamily. As to quaternary structure, tetramer of two alpha and two beta subunits. It depends on Mg(2+) as a cofactor.

The protein localises to the cytoplasm. It catalyses the reaction tRNA(Phe) + L-phenylalanine + ATP = L-phenylalanyl-tRNA(Phe) + AMP + diphosphate + H(+). The polypeptide is Phenylalanine--tRNA ligase beta subunit (Thermococcus sibiricus (strain DSM 12597 / MM 739)).